The following is a 331-amino-acid chain: Beta-ketoacyl-[acyl-carrier-protein] synthase III (331 aa).

Catalysis depends on residues cysteine 115 and histidine 255. An ACP-binding region spans residues 256–260 (QANFR). The active site involves asparagine 285.

Belongs to the thiolase-like superfamily. FabH family. As to quaternary structure, homodimer.

The protein resides in the cytoplasm. The catalysed reaction is malonyl-[ACP] + acetyl-CoA + H(+) = 3-oxobutanoyl-[ACP] + CO2 + CoA. Its pathway is lipid metabolism; fatty acid biosynthesis. Catalyzes the condensation reaction of fatty acid synthesis by the addition to an acyl acceptor of two carbons from malonyl-ACP. Catalyzes the first condensation reaction which initiates fatty acid synthesis and may therefore play a role in governing the total rate of fatty acid production. Possesses both acetoacetyl-ACP synthase and acetyl transacylase activities. Its substrate specificity determines the biosynthesis of branched-chain and/or straight-chain of fatty acids. In Helicobacter pylori (strain Shi470), this protein is Beta-ketoacyl-[acyl-carrier-protein] synthase III.